We begin with the raw amino-acid sequence, 113 residues long: Hydrogenase maturation factor HypA (113 aa).

His2 contributes to the Ni(2+) binding site. Zn(2+) is bound by residues Cys73, Cys75, Cys89, and Cys92.

The protein belongs to the HypA/HybF family.

Its function is as follows. Involved in the maturation of [NiFe] hydrogenases. Required for nickel insertion into the metal center of the hydrogenase. The chain is Hydrogenase maturation factor HypA from Methanocella arvoryzae (strain DSM 22066 / NBRC 105507 / MRE50).